Reading from the N-terminus, the 254-residue chain is tRNA (guanine-N(1)-)-methyltransferase (254 aa).

Residues Gly-119 and 139 to 144 each bind S-adenosyl-L-methionine; that span reads IGDFVL.

It belongs to the RNA methyltransferase TrmD family. As to quaternary structure, homodimer.

It is found in the cytoplasm. The enzyme catalyses guanosine(37) in tRNA + S-adenosyl-L-methionine = N(1)-methylguanosine(37) in tRNA + S-adenosyl-L-homocysteine + H(+). In terms of biological role, specifically methylates guanosine-37 in various tRNAs. The sequence is that of tRNA (guanine-N(1)-)-methyltransferase from Dechloromonas aromatica (strain RCB).